The chain runs to 155 residues: Ribosome maturation factor RimP (155 aa).

Belongs to the RimP family.

It localises to the cytoplasm. Functionally, required for maturation of 30S ribosomal subunits. The protein is Ribosome maturation factor RimP of Desulforapulum autotrophicum (strain ATCC 43914 / DSM 3382 / VKM B-1955 / HRM2) (Desulfobacterium autotrophicum).